The chain runs to 397 residues: Elongation factor Tu (397 aa).

In terms of domain architecture, tr-type G spans 10–206 (KPHVNIGTIG…AVDEYIPTPE (197 aa)). Residues 19–26 (GHVDHGKT) form a G1 region. 19 to 26 (GHVDHGKT) is a GTP binding site. Thr-26 provides a ligand contact to Mg(2+). Residues 60–64 (GITIS) are G2. The segment at 81 to 84 (DCPG) is G3. GTP-binding positions include 81–85 (DCPGH) and 136–139 (NKAD). The interval 136–139 (NKAD) is G4. The segment at 174-176 (SAL) is G5.

This sequence belongs to the TRAFAC class translation factor GTPase superfamily. Classic translation factor GTPase family. EF-Tu/EF-1A subfamily. Monomer.

Its subcellular location is the cytoplasm. The catalysed reaction is GTP + H2O = GDP + phosphate + H(+). Functionally, GTP hydrolase that promotes the GTP-dependent binding of aminoacyl-tRNA to the A-site of ribosomes during protein biosynthesis. The polypeptide is Elongation factor Tu (Clostridium tetani (strain Massachusetts / E88)).